Here is a 302-residue protein sequence, read N- to C-terminus: Mitochondrial glycine transporter (302 aa).

Solcar repeat units follow at residues 22-112 (HPVF…LKHH), 119-203 (PKPL…AKKL), and 213-297 (FSPV…MMEK). 6 helical membrane passes run 28–53 (FVCG…TRLQ), 87–113 (GVSP…KHHF), 125–150 (VMLG…TRYE), 178–201 (GLTA…TRAK), 217–243 (LNFG…KTHI), and 272–290 (GGLP…AWTV).

It belongs to the mitochondrial carrier (TC 2.A.29) family. SLC25A38 subfamily.

Its subcellular location is the mitochondrion inner membrane. It carries out the reaction glycine(in) = glycine(out). In terms of biological role, mitochondrial glycine transporter that imports glycine into the mitochondrial matrix. Plays an important role in providing glycine for the first enzymatic step in heme biosynthesis, the condensation of glycine with succinyl-CoA to produce 5-aminolevulinate (ALA) in the mitochondrial matrix. Required during erythropoiesis. Functionally, may play a role as pro-apoptotic protein that induces caspase-dependent apoptosis. This is Mitochondrial glycine transporter from Xenopus tropicalis (Western clawed frog).